The sequence spans 205 residues: ATP phosphoribosyltransferase (205 aa).

Belongs to the ATP phosphoribosyltransferase family. Short subfamily. As to quaternary structure, heteromultimer composed of HisG and HisZ subunits.

It is found in the cytoplasm. The catalysed reaction is 1-(5-phospho-beta-D-ribosyl)-ATP + diphosphate = 5-phospho-alpha-D-ribose 1-diphosphate + ATP. Its pathway is amino-acid biosynthesis; L-histidine biosynthesis; L-histidine from 5-phospho-alpha-D-ribose 1-diphosphate: step 1/9. In terms of biological role, catalyzes the condensation of ATP and 5-phosphoribose 1-diphosphate to form N'-(5'-phosphoribosyl)-ATP (PR-ATP). Has a crucial role in the pathway because the rate of histidine biosynthesis seems to be controlled primarily by regulation of HisG enzymatic activity. This Vesicomyosocius okutanii subsp. Calyptogena okutanii (strain HA) protein is ATP phosphoribosyltransferase.